Reading from the N-terminus, the 175-residue chain is NADH-quinone oxidoreductase subunit I (175 aa).

4Fe-4S ferredoxin-type domains lie at 44 to 74 (LNRYADGLEKCIGCELCAWACPADAIFVEGA) and 90 to 119 (RVYQINYLRCIGCGLCIEACPTRALTMTND). [4Fe-4S] cluster-binding residues include Cys54, Cys57, Cys60, Cys64, Cys99, Cys102, Cys105, and Cys109. Residues 148–175 (PPHAMAPGATDEDYYRGTVSPSAEADAR) are disordered.

Belongs to the complex I 23 kDa subunit family. NDH-1 is composed of 14 different subunits. Subunits NuoA, H, J, K, L, M, N constitute the membrane sector of the complex. It depends on [4Fe-4S] cluster as a cofactor.

The protein localises to the cell membrane. It carries out the reaction a quinone + NADH + 5 H(+)(in) = a quinol + NAD(+) + 4 H(+)(out). NDH-1 shuttles electrons from NADH, via FMN and iron-sulfur (Fe-S) centers, to quinones in the respiratory chain. The immediate electron acceptor for the enzyme in this species is believed to be menaquinone. Couples the redox reaction to proton translocation (for every two electrons transferred, four hydrogen ions are translocated across the cytoplasmic membrane), and thus conserves the redox energy in a proton gradient. This Mycolicibacterium gilvum (strain PYR-GCK) (Mycobacterium gilvum (strain PYR-GCK)) protein is NADH-quinone oxidoreductase subunit I.